The primary structure comprises 658 residues: Probable methyl-accepting chemotaxis protein BT9727_0469 (658 aa).

At 1–14 (MLQGKLRRSSLKAK) the chain is on the cytoplasmic side. A helical membrane pass occupies residues 15-35 (LLVSFVIVLILPSIVIGWTSY). The Extracellular portion of the chain corresponds to 36 to 283 (QQAKTNFNET…ANPIFYKTLT (248 aa)). Residues 44 to 109 (ETILQSAEDN…NKLHPEIEAI (66 aa)) adopt a coiled-coil conformation. The region spanning 150–221 (ITAPYKSSTT…AHPTMKPGDK (72 aa)) is the Cache domain. A helical transmembrane segment spans residues 284–304 (VIGISLIIGGVLIYFIIASII). One can recognise an HAMP domain in the interval 301 to 353 (ASIISPLKQLVISSKKISEGDLTETITVHSKDEIGQLGESFNEMAASLHHVIS). At 305–658 (SPLKQLVISS…LQEMIGKFKV (354 aa)) the chain is on the cytoplasmic side. Position 368 is a glutamate methyl ester (Glu) (glutamate 368). The Methyl-accepting transducer domain maps to 372 to 622 (SMKQTSEATE…ENAASVQNIA (251 aa)). A Deamidated glutamine modification is found at glutamine 592. A Glutamate methyl ester (Gln) modification is found at glutamine 592. Glutamate 627 and glutamate 634 each carry glutamate methyl ester (Glu).

This sequence belongs to the methyl-accepting chemotaxis (MCP) protein family.

Its subcellular location is the cell membrane. Its function is as follows. Chemotactic-signal transducers respond to changes in the concentration of attractants and repellents in the environment, transduce a signal from the outside to the inside of the cell, and facilitate sensory adaptation through the variation of the level of methylation. The polypeptide is Probable methyl-accepting chemotaxis protein BT9727_0469 (Bacillus thuringiensis subsp. konkukian (strain 97-27)).